The primary structure comprises 309 residues: Carbamate kinase-like protein (309 aa).

Positions 125–144 (NKPVGPFYNTEETARSANPN) are disordered.

It belongs to the carbamate kinase family.

The protein is Carbamate kinase-like protein of Mycoplasma pneumoniae (strain ATCC 29342 / M129 / Subtype 1) (Mycoplasmoides pneumoniae).